Reading from the N-terminus, the 230-residue chain is Cytidylate kinase (230 aa).

12-20 contributes to the ATP binding site; it reads GPSGAGKST.

Belongs to the cytidylate kinase family. Type 1 subfamily.

It is found in the cytoplasm. The enzyme catalyses CMP + ATP = CDP + ADP. The catalysed reaction is dCMP + ATP = dCDP + ADP. The protein is Cytidylate kinase of Corynebacterium diphtheriae (strain ATCC 700971 / NCTC 13129 / Biotype gravis).